Reading from the N-terminus, the 190-residue chain is Holliday junction branch migration complex subunit RuvA (190 aa).

Residues 1 to 64 (MIGRITGTLI…EDAHILYGFA (64 aa)) are domain I. Residues 65–137 (TAAERGAFRE…MRGKLGADIG (73 aa)) form a domain II region. The flexible linker stretch occupies residues 137-141 (GATAH). The domain III stretch occupies residues 142 to 190 (AVPDSQTDILNALLALGYSDKESQAALKKLPEGTGVSEGIRLALKALVR).

It belongs to the RuvA family. Homotetramer. Forms an RuvA(8)-RuvB(12)-Holliday junction (HJ) complex. HJ DNA is sandwiched between 2 RuvA tetramers; dsDNA enters through RuvA and exits via RuvB. An RuvB hexamer assembles on each DNA strand where it exits the tetramer. Each RuvB hexamer is contacted by two RuvA subunits (via domain III) on 2 adjacent RuvB subunits; this complex drives branch migration. In the full resolvosome a probable DNA-RuvA(4)-RuvB(12)-RuvC(2) complex forms which resolves the HJ.

It is found in the cytoplasm. Its function is as follows. The RuvA-RuvB-RuvC complex processes Holliday junction (HJ) DNA during genetic recombination and DNA repair, while the RuvA-RuvB complex plays an important role in the rescue of blocked DNA replication forks via replication fork reversal (RFR). RuvA specifically binds to HJ cruciform DNA, conferring on it an open structure. The RuvB hexamer acts as an ATP-dependent pump, pulling dsDNA into and through the RuvAB complex. HJ branch migration allows RuvC to scan DNA until it finds its consensus sequence, where it cleaves and resolves the cruciform DNA. The polypeptide is Holliday junction branch migration complex subunit RuvA (Bordetella petrii (strain ATCC BAA-461 / DSM 12804 / CCUG 43448)).